Consider the following 237-residue polypeptide: Purine nucleoside phosphorylase DeoD-type (237 aa).

An a purine D-ribonucleoside-binding site is contributed by His4. Residues Gly20, Arg24, Arg43, and 87–90 each bind phosphate; that span reads RVGT. A purine D-ribonucleoside-binding positions include 179 to 181 and 203 to 204; these read EME and SD. Asp204 functions as the Proton donor in the catalytic mechanism.

This sequence belongs to the PNP/UDP phosphorylase family. Homohexamer; trimer of homodimers.

It carries out the reaction a purine D-ribonucleoside + phosphate = a purine nucleobase + alpha-D-ribose 1-phosphate. The catalysed reaction is a purine 2'-deoxy-D-ribonucleoside + phosphate = a purine nucleobase + 2-deoxy-alpha-D-ribose 1-phosphate. Functionally, catalyzes the reversible phosphorolytic breakdown of the N-glycosidic bond in the beta-(deoxy)ribonucleoside molecules, with the formation of the corresponding free purine bases and pentose-1-phosphate. The sequence is that of Purine nucleoside phosphorylase DeoD-type from Streptococcus pyogenes serotype M4 (strain MGAS10750).